Consider the following 316-residue polypeptide: tRNA(Ile)-lysidine synthase (316 aa).

33–38 (SGGTDS) lines the ATP pocket.

The protein belongs to the tRNA(Ile)-lysidine synthase family.

The protein resides in the cytoplasm. The catalysed reaction is cytidine(34) in tRNA(Ile2) + L-lysine + ATP = lysidine(34) in tRNA(Ile2) + AMP + diphosphate + H(+). Ligates lysine onto the cytidine present at position 34 of the AUA codon-specific tRNA(Ile) that contains the anticodon CAU, in an ATP-dependent manner. Cytidine is converted to lysidine, thus changing the amino acid specificity of the tRNA from methionine to isoleucine. The protein is tRNA(Ile)-lysidine synthase of Bdellovibrio bacteriovorus (strain ATCC 15356 / DSM 50701 / NCIMB 9529 / HD100).